The following is a 428-amino-acid chain: Trigger factor (428 aa).

Positions 163 to 248 constitute a PPIase FKBP-type domain; sequence GNIAVIDFKG…VKEIKVKELP (86 aa).

It belongs to the FKBP-type PPIase family. Tig subfamily.

It is found in the cytoplasm. The enzyme catalyses [protein]-peptidylproline (omega=180) = [protein]-peptidylproline (omega=0). Its function is as follows. Involved in protein export. Acts as a chaperone by maintaining the newly synthesized protein in an open conformation. Functions as a peptidyl-prolyl cis-trans isomerase. This Clostridium perfringens (strain ATCC 13124 / DSM 756 / JCM 1290 / NCIMB 6125 / NCTC 8237 / Type A) protein is Trigger factor.